The following is a 215-amino-acid chain: Ion-translocating oxidoreductase complex subunit G (215 aa).

A helical membrane pass occupies residues 9-29 (GLILSLFAIITSGLIALTYFG). FMN phosphoryl threonine is present on Thr-176.

It belongs to the RnfG family. The complex is composed of six subunits: RnfA, RnfB, RnfC, RnfD, RnfE and RnfG. It depends on FMN as a cofactor.

The protein resides in the cell inner membrane. In terms of biological role, part of a membrane-bound complex that couples electron transfer with translocation of ions across the membrane. In Pseudoalteromonas atlantica (strain T6c / ATCC BAA-1087), this protein is Ion-translocating oxidoreductase complex subunit G.